A 459-amino-acid chain; its full sequence is DnaJ homolog subfamily A member 1 homolog (459 aa).

Residues 6 to 73 (EYYERLGVKP…EKRKMYDSYG (68 aa)) form the J domain. The CR-type zinc-finger motif lies at 158–243 (GKLVKISISR…CKGKRVIQGK (86 aa)). The Zn(2+) site is built by cysteine 171, cysteine 174, cysteine 188, cysteine 191, cysteine 215, cysteine 218, cysteine 231, and cysteine 234. CXXCXGXG motif repeat units lie at residues 171–178 (CKTCKGSG), 188–195 (CPTCNGSR), 215–222 (CHTCHGTG), and 231–238 (CKECKGKR). The tract at residues 405–459 (NTNEQSSHGGAGGAYQQHGGAYGHQKQQQQGFNPADFGAQFGGGGPQQAQQCQQQ) is disordered. Over residues 418-435 (AYQQHGGAYGHQKQQQQG) the composition is skewed to low complexity. Cysteine methyl ester is present on cysteine 456. Residue cysteine 456 is the site of S-farnesyl cysteine attachment. A propeptide spans 457–459 (QQQ) (removed in mature form).

It localises to the membrane. Its subcellular location is the cytoplasm. The protein localises to the microsome. The protein resides in the mitochondrion. It is found in the nucleus. It localises to the perinuclear region. Functionally, co-chaperone for Hsp70 family members. Plays a role in protein transport into mitochondria and in the regulation of apoptosis via its role as co-chaperone. This Dictyostelium discoideum (Social amoeba) protein is DnaJ homolog subfamily A member 1 homolog (dnaja1).